We begin with the raw amino-acid sequence, 226 residues long: MDSLSDIDGDFDGRNEGGSSSDYRLLGRQITVHQFMGGGKAADLLLWRRRHLSLGVIIISTVAWLIFEFSGLPFLSVSSDVLLIVIMISFVHARVSAFRNRQLHSLPELVLSEEMVNSAAASFRIKLNHLLVMAHDVTVGNDFRLFFKVVICLWLLSAIGSYISLCTLLYIGTILSVTIPALYSKYQSKVDKCCGTIHRRLSHHYKIVDENVISRLSWSLSKDKDS.

One can recognise a Reticulon domain in the interval 41-224; sequence AADLLLWRRR…RLSWSLSKDK (184 aa). The next 3 membrane-spanning stretches (helical) occupy residues 54–74, 75–95, and 149–169; these read LGVI…GLPF, LSVS…HARV, and VVIC…CTLL.

It localises to the endoplasmic reticulum membrane. The sequence is that of Reticulon-like protein B16 (RTNLB16) from Arabidopsis thaliana (Mouse-ear cress).